The primary structure comprises 92 residues: UPF0223 protein SPCG_1392 (92 aa).

Belongs to the UPF0223 family.

This is UPF0223 protein SPCG_1392 from Streptococcus pneumoniae (strain CGSP14).